The primary structure comprises 266 residues: Diphthine synthase (266 aa).

S-adenosyl-L-methionine contacts are provided by residues Leu-9, Asp-84, Val-87, 112–113 (SI), Leu-169, Ala-210, and His-235.

This sequence belongs to the diphthine synthase family. As to quaternary structure, homodimer.

It catalyses the reaction 2-[(3S)-amino-3-carboxypropyl]-L-histidyl-[translation elongation factor 2] + 3 S-adenosyl-L-methionine = diphthine-[translation elongation factor 2] + 3 S-adenosyl-L-homocysteine + 3 H(+). It participates in protein modification; peptidyl-diphthamide biosynthesis. Its function is as follows. S-adenosyl-L-methionine-dependent methyltransferase that catalyzes the trimethylation of the amino group of the modified target histidine residue in translation elongation factor 2 (EF-2), to form an intermediate called diphthine. The three successive methylation reactions represent the second step of diphthamide biosynthesis. The sequence is that of Diphthine synthase from Methanosarcina mazei (strain ATCC BAA-159 / DSM 3647 / Goe1 / Go1 / JCM 11833 / OCM 88) (Methanosarcina frisia).